Here is a 327-residue protein sequence, read N- to C-terminus: (-)-delta-cadinene synthase (327 aa).

Asp84, Asp85, Asn222, Thr226, and Glu230 together coordinate Mg(2+).

Belongs to the terpene synthase family.

It carries out the reaction (2E,6E)-farnesyl diphosphate = (-)-delta-cadinene + diphosphate. In terms of biological role, catalyzes the conversion of (2E,6E)-farnesyl diphosphate into (-)-delta-cadinene. Cyclization mechanism involves an intermediate nerolidyl diphosphate leading to a helminthogermacradienyl cation. This Streptomyces clavuligerus protein is (-)-delta-cadinene synthase.